A 424-amino-acid polypeptide reads, in one-letter code: Histidine--tRNA ligase (424 aa).

This sequence belongs to the class-II aminoacyl-tRNA synthetase family. As to quaternary structure, homodimer.

The protein resides in the cytoplasm. It carries out the reaction tRNA(His) + L-histidine + ATP = L-histidyl-tRNA(His) + AMP + diphosphate + H(+). The protein is Histidine--tRNA ligase of Shewanella halifaxensis (strain HAW-EB4).